Here is a 530-residue protein sequence, read N- to C-terminus: Vesicular acetylcholine transporter (530 aa).

The Cytoplasmic segment spans residues 1–33 (MEPTAPTGQARAAATKLSEAVGAALQEPQRQRR). The chain crosses the membrane as a helical span at residues 34–54 (LVLVIVCVALLLDNMLYMVIV). The Lumenal, vesicle segment spans residues 55-125 (PIVPDYIAHM…PTESEDVKIG (71 aa)). N-linked (GlcNAc...) asparagine glycans are attached at residues asparagine 89 and asparagine 96. The chain crosses the membrane as a helical span at residues 126-146 (VLFASKAILQLLVNPLSGPFI). The Cytoplasmic portion of the chain corresponds to 147–152 (DRMSYD). The chain crosses the membrane as a helical span at residues 153–173 (VPLLIGLGVMFASTVMFAFAE). Residues 174–182 (DYATFFAAR) lie on the Lumenal, vesicle side of the membrane. A helical transmembrane segment spans residues 183 to 203 (SLQGLGSAFADTSGIAMIADK). Over 204–213 (YPEEPERSRA) the chain is Cytoplasmic. Residues 214-234 (LGVALAFISFGSLVAPPFGGI) form a helical membrane-spanning segment. The Lumenal, vesicle portion of the chain corresponds to 235–242 (LYEFAGKR). A helical transmembrane segment spans residues 243-263 (VPFLVLAAVSLFDALLLLAVA). The Cytoplasmic segment spans residues 264–288 (KPFSAAARARANLPVGTPIHRLMLD). Residues 289-309 (PYIAVVAGALTTCNIPLAFLE) traverse the membrane as a helical segment. At 310 to 325 (PTIATWMKHTMAASEW) the chain is on the lumenal, vesicle side. Residues 326–346 (EMGMVWLPAFVPHVLGVYLTV) form a helical membrane-spanning segment. Residues 347 to 356 (RLAARYPHLQ) lie on the Cytoplasmic side of the membrane. The chain crosses the membrane as a helical span at residues 357–377 (WLYGALGLAVIGVSSCVVPAC). Topologically, residues 378–388 (RSFAPLVVSLC) are lumenal, vesicle. Residues 389-409 (GLCFGIALVDTALLPTLAFLV) traverse the membrane as a helical segment. At 410–422 (DVRHVSVYGSVYA) the chain is on the cytoplasmic side. A helical membrane pass occupies residues 423–443 (IADISYSVAYALGPIVAGHIV). The Lumenal, vesicle segment spans residues 444-447 (HSLG). The chain crosses the membrane as a helical span at residues 448–468 (FEQLSLGMGLANLLYAPVLLL). Residues 469–530 (LRNVGLLTRS…EDDYNYYSRS (62 aa)) are Cytoplasmic-facing. A mediates interaction with SEC14L1 region spans residues 471–530 (NVGLLTRSRSERDVLLDEPPQGLYDAVRLREVQGKDGGEPCSPPGPFDGCEDDYNYYSRS). The segment at 504-530 (GKDGGEPCSPPGPFDGCEDDYNYYSRS) is disordered.

It belongs to the major facilitator superfamily. Vesicular transporter family. Interacts with SEC14L1. In terms of tissue distribution, expressed in the spinal cord, brain (excluding the cerebellum), brain stem and cholinergic tissues. Not expressed in peripheral tissues such as liver and kidney.

It is found in the cytoplasmic vesicle. Its subcellular location is the secretory vesicle. The protein localises to the synaptic vesicle membrane. The catalysed reaction is acetylcholine(out) + 2 H(+)(in) = acetylcholine(in) + 2 H(+)(out). It catalyses the reaction choline(in) + 2 H(+)(out) = choline(out) + 2 H(+)(in). It carries out the reaction serotonin(in) + 2 H(+)(out) = serotonin(out) + 2 H(+)(in). In terms of biological role, electrogenic antiporter that exchanges one cholinergic neurotransmitter, acetylcholine or choline, with two intravesicular protons across the membrane of synaptic vesicles. Uses the electrochemical proton gradient established by the V-type proton-pump ATPase to store neurotransmitters inside the vesicles prior to their release via exocytosis. Determines cholinergic vesicular quantal size at presynaptic nerve terminals in developing neuro-muscular junctions with an impact on motor neuron differentiation and innervation pattern. Part of forebrain cholinergic system, regulates hippocampal synapse transmissions that underlie spatial memory formation. Can transport serotonin. The sequence is that of Vesicular acetylcholine transporter (Slc18a3) from Mus musculus (Mouse).